Consider the following 96-residue polypeptide: Protein Vpr (96 aa).

Positions 1–42 are homooligomerization; sequence MEQAPEDQGPQREPYNDWTLELLEELKNEAVRHFPRIWLHSL. Phosphoserine; by host occurs at positions 79, 94, and 96.

The protein belongs to the HIV-1 VPR protein family. In terms of assembly, homooligomer, may form homodimer. Interacts with p6-gag region of the Pr55 Gag precursor protein through a (Leu-X-X)4 motif near the C-terminus of the P6gag protein. Interacts with host UNG. May interact with host RAD23A/HHR23A. Interacts with host VPRBP/DCAF1, leading to hijack the CUL4A-RBX1-DDB1-DCAF1/VPRBP complex, mediating ubiquitination of host proteins such as TERT and ZGPAT and arrest of the cell cycle in G2 phase. Post-translationally, phosphorylated on several residues by host. These phosphorylations regulate VPR activity for the nuclear import of the HIV-1 pre-integration complex.

Its subcellular location is the virion. The protein localises to the host nucleus. It is found in the host extracellular space. In terms of biological role, during virus replication, may deplete host UNG protein, and incude G2-M cell cycle arrest. Acts by targeting specific host proteins for degradation by the 26S proteasome, through association with the cellular CUL4A-DDB1 E3 ligase complex by direct interaction with host VPRPB/DCAF-1. Cell cycle arrest reportedly occurs within hours of infection and is not blocked by antiviral agents, suggesting that it is initiated by the VPR carried into the virion. Additionally, VPR induces apoptosis in a cell cycle dependent manner suggesting that these two effects are mechanistically linked. Detected in the serum and cerebrospinal fluid of AIDS patient, VPR may also induce cell death to bystander cells. Functionally, during virus entry, plays a role in the transport of the viral pre-integration (PIC) complex to the host nucleus. This function is crucial for viral infection of non-dividing macrophages. May act directly at the nuclear pore complex, by binding nucleoporins phenylalanine-glycine (FG)-repeat regions. The protein is Protein Vpr of Human immunodeficiency virus type 1 group M subtype B (strain 89.6) (HIV-1).